The chain runs to 314 residues: Methionyl-tRNA formyltransferase (314 aa).

113–116 contributes to the (6S)-5,6,7,8-tetrahydrofolate binding site; sequence SLLP.

This sequence belongs to the Fmt family.

The catalysed reaction is L-methionyl-tRNA(fMet) + (6R)-10-formyltetrahydrofolate = N-formyl-L-methionyl-tRNA(fMet) + (6S)-5,6,7,8-tetrahydrofolate + H(+). In terms of biological role, attaches a formyl group to the free amino group of methionyl-tRNA(fMet). The formyl group appears to play a dual role in the initiator identity of N-formylmethionyl-tRNA by promoting its recognition by IF2 and preventing the misappropriation of this tRNA by the elongation apparatus. In Chlorobaculum tepidum (strain ATCC 49652 / DSM 12025 / NBRC 103806 / TLS) (Chlorobium tepidum), this protein is Methionyl-tRNA formyltransferase.